A 440-amino-acid polypeptide reads, in one-letter code: Glutamyl-tRNA reductase (440 aa).

Substrate-binding positions include T47–R50, S110, E115–E117, and Q121. Catalysis depends on C48, which acts as the Nucleophile. G192–A197 contributes to the NADP(+) binding site.

The protein belongs to the glutamyl-tRNA reductase family. Homodimer.

It carries out the reaction (S)-4-amino-5-oxopentanoate + tRNA(Glu) + NADP(+) = L-glutamyl-tRNA(Glu) + NADPH + H(+). The protein operates within porphyrin-containing compound metabolism; protoporphyrin-IX biosynthesis; 5-aminolevulinate from L-glutamyl-tRNA(Glu): step 1/2. Its function is as follows. Catalyzes the NADPH-dependent reduction of glutamyl-tRNA(Glu) to glutamate 1-semialdehyde (GSA). This is Glutamyl-tRNA reductase from Paenarthrobacter aurescens (strain TC1).